The chain runs to 143 residues: Large ribosomal subunit protein uL11 (143 aa).

It belongs to the universal ribosomal protein uL11 family. In terms of assembly, part of the ribosomal stalk of the 50S ribosomal subunit. Interacts with L10 and the large rRNA to form the base of the stalk. L10 forms an elongated spine to which L12 dimers bind in a sequential fashion forming a multimeric L10(L12)X complex. In terms of processing, one or more lysine residues are methylated.

Forms part of the ribosomal stalk which helps the ribosome interact with GTP-bound translation factors. The polypeptide is Large ribosomal subunit protein uL11 (Kocuria rhizophila (strain ATCC 9341 / DSM 348 / NBRC 103217 / DC2201)).